Reading from the N-terminus, the 138-residue chain is Acidic phospholipase A2 5 (138 aa).

The first 16 residues, 1–16 (MRTLWIVAVWLIGVEG), serve as a signal peptide directing secretion. Cystine bridges form between Cys42–Cys131, Cys44–Cys60, Cys59–Cys111, Cys65–Cys138, Cys66–Cys104, Cys73–Cys97, and Cys91–Cys102. Positions 43, 45, and 47 each coordinate Ca(2+). His63 is a catalytic residue. Asp64 is a Ca(2+) binding site. Asp105 is a catalytic residue.

The protein belongs to the phospholipase A2 family. Group II subfamily. D49 sub-subfamily. The cofactor is Ca(2+). In terms of tissue distribution, expressed by the venom gland.

It is found in the secreted. The catalysed reaction is a 1,2-diacyl-sn-glycero-3-phosphocholine + H2O = a 1-acyl-sn-glycero-3-phosphocholine + a fatty acid + H(+). Functionally, PLA2 catalyzes the calcium-dependent hydrolysis of the 2-acyl groups in 3-sn-phosphoglycerides. This chain is Acidic phospholipase A2 5, found in Echis ocellatus (Ocellated saw-scaled viper).